Reading from the N-terminus, the 78-residue chain is MSAYCQVTGRKPSFGKSVSHSHRRTNRRWNPNIQRRTFYLPSEGRSITLNVSTKGLKTIDRDGIESVVAKIRARGEKI.

The tract at residues Met1 to Asn26 is disordered.

Belongs to the bacterial ribosomal protein bL28 family.

This Corynebacterium jeikeium (strain K411) protein is Large ribosomal subunit protein bL28.